We begin with the raw amino-acid sequence, 55 residues long: Lantibiotic epilancin (55 aa).

Positions 1 to 24 (MNNSLFDLNLNKGVETQKSDLSPQ) are cleaved as a propeptide — cleaved by ElxP. Ser-25 is subject to D-lactate; by the dehydratase ElxB and the dehydrogenase ElxO. Ser-27 is modified (2,3-didehydroalanine (Ser); by the dehydratase ElxB). Residue Thr-31 is modified to 2,3-didehydrobutyrine; by the dehydratase ElxB. At Ser-32 the chain carries 2,3-didehydroalanine (Ser); by the dehydratase ElxB. A cross-link (lanthionine (Ser-Cys); by the dehydratase ElxB and the cyclase ElxC) is located at residues 36-40 (SKKYC). 2 cross-links (beta-methyllanthionine (Thr-Cys); by the dehydratase ElxB and the cyclase ElxC) span residues 44–47 (TLTC) and 46–49 (TCGC). Residue Thr-52 is modified to 2,3-didehydrobutyrine; by the dehydratase ElxB.

The protein belongs to the type A lantibiotic family. Maturation of this lantibiotic involves the enzymatic conversion of Thr, and Ser into dehydrated AA by ElxB and the formation of thioether bonds with cysteine by the cyclase ElxC. The next steps are cleavage of the leader peptide by ElxP and membrane translocation by ElxT. The leader peptide may be removed before membrane translocation, in contrast to other lantibiotics for which the cleavage occur after translocation. This is suggested by the probable cytoplasmic localization of the serine protease ElxP that cleaves the leader peptide. Post-translationally, it is not established whether the 2,3-didehydrobutyrine is the E- or Z-isomer. In terms of processing, the N-terminal D-lactate is probably produced by dehydration of Ser-25 by ElxB, followed by proteolytic removal of the leader peptide by the serine protease ElxP and hydrolysis of the resulting new N-terminal dehydroalanine. This hydrolysis may occur spontaneously. The pyruvate group thus formed is reduced to D-lactate by the NADPH-dependent oxidoreductase ElxO. This N-terminal D-lactate protects the lantibiotic against degradation against aminopeptidase.

Functionally, lanthionine-containing peptide antibiotic (lantibiotic) active on Gram-positive bacteria such as staphylococci, enterococci and streptococci. The bactericidal activity of lantibiotics is based on depolarization of energized bacterial cytoplasmic membranes, initiated by the formation of aqueous transmembrane pores. This chain is Lantibiotic epilancin (elkA), found in Staphylococcus epidermidis.